The primary structure comprises 630 residues: ATP synthase subunit alpha (630 aa).

173 to 180 contributes to the ATP binding site; the sequence is GDRQTGKT. The disordered stretch occupies residues 592 to 630; it reads AGGASTAADEDGAGDDEEEAPAPKAKSKNAKSASKAKEK. Positions 599-611 are enriched in acidic residues; sequence ADEDGAGDDEEEA.

This sequence belongs to the ATPase alpha/beta chains family. F-type ATPases have 2 components, CF(1) - the catalytic core - and CF(0) - the membrane proton channel. CF(1) has five subunits: alpha(3), beta(3), gamma(1), delta(1), epsilon(1). CF(0) has three main subunits: a(1), b(2) and c(9-12). The alpha and beta chains form an alternating ring which encloses part of the gamma chain. CF(1) is attached to CF(0) by a central stalk formed by the gamma and epsilon chains, while a peripheral stalk is formed by the delta and b chains.

The protein resides in the cell inner membrane. It catalyses the reaction ATP + H2O + 4 H(+)(in) = ADP + phosphate + 5 H(+)(out). Its function is as follows. Produces ATP from ADP in the presence of a proton gradient across the membrane. The alpha chain is a regulatory subunit. This is ATP synthase subunit alpha from Sorangium cellulosum (strain So ce56) (Polyangium cellulosum (strain So ce56)).